Reading from the N-terminus, the 85-residue chain is Cell division topological specificity factor (85 aa).

This sequence belongs to the MinE family.

Its function is as follows. Prevents the cell division inhibition by proteins MinC and MinD at internal division sites while permitting inhibition at polar sites. This ensures cell division at the proper site by restricting the formation of a division septum at the midpoint of the long axis of the cell. This chain is Cell division topological specificity factor, found in Shewanella oneidensis (strain ATCC 700550 / JCM 31522 / CIP 106686 / LMG 19005 / NCIMB 14063 / MR-1).